The following is an 825-amino-acid chain: Hypoxia-inducible factor 1-alpha (825 aa).

The tract at residues 1–30 (MEGAGGENEKKKMSSERRKEKSRDAARSRR) is disordered. The interval 1-401 (MEGAGGENEK…KEPDALTLLA (401 aa)) is interaction with TSGA10. Over residues 7 to 30 (ENEKKKMSSERRKEKSRDAARSRR) the composition is skewed to basic and acidic residues. In terms of domain architecture, bHLH spans 17-70 (RRKEKSRDAARSRRSKESEVFYELAHQLPLPHNVSSHLDKASVMRLTISYLRVR). Residues 21-30 (KSRDAARSRR) are DNA-binding. One can recognise a PAS 1 domain in the interval 85 to 158 (KAQMNCFYLK…THRNGPVRKG (74 aa)). The tract at residues 170–191 (RMKCTLTSRGRTMNIKSATWKV) is required for heterodimer formation with ARNT. The PAS 2 domain occupies 228–298 (PHPSNIEIPL…KTHHDMFTKG (71 aa)). A Phosphoserine; by CK1 modification is found at Ser-247. The 44-residue stretch at 302–345 (TGQYRMLAKRGGYVWVETQATVIYNTKDSQPQCIVCVNYVVSGI) folds into the PAC domain. The tract at residues 401–602 (APAAGDTIIS…STVTGFQQTQ (202 aa)) is ODD. Pro-402 carries the post-translational modification 4-hydroxyproline. The span at 492 to 516 (QIQDQPASPSDGSTRQSSPEPNSPS) shows a compositional bias: polar residues. The interval 492-520 (QIQDQPASPSDGSTRQSSPEPNSPSEYCF) is disordered. The interval 530–574 (FKLELVEKLFAEDTEAKNPFSAQDTDLDLEMLAPYIPMDDDFQLR) is NTAD. At Lys-531 the chain carries N6-acetyllysine; alternate. Lys-531 participates in a covalent cross-link: Glycyl lysine isopeptide (Lys-Gly) (interchain with G-Cter in ubiquitin); alternate. Glycyl lysine isopeptide (Lys-Gly) (interchain with G-Cter in ubiquitin) cross-links involve residues Lys-537 and Lys-546. Ser-550 carries the phosphoserine; by GSK3-beta modification. Position 554 is a phosphothreonine; by GSK3-beta (Thr-554). The residue at position 563 (Pro-563) is a 4-hydroxyproline. Ser-575 bears the Phosphoserine; by PLK3 mark. Positions 575 to 784 (SFDQLSPLES…SDLACRLLGQ (210 aa)) are ID. Disordered regions lie at residues 579-602 (LSPLESNSPSPPSVSTVTGFQQTQ) and 654-674 (AKASAYSGTHSRTASPDRAGK). Ser-588 is modified (phosphoserine; by GSK3-beta). Polar residues predominate over residues 654–667 (AKASAYSGTHSRTA). Ser-657 carries the post-translational modification Phosphoserine; by PLK3. The Nuclear localization signal motif lies at 717-721 (RKRKM). The tract at residues 785–825 (SMDESGLPQLTSYDCEVNAPIQGSRNLLQGEELLRALDQVN) is CTAD. An S-nitrosocysteine modification is found at Cys-799. Asn-802 is modified ((3S)-3-hydroxyasparagine).

Interacts with the ARNT; forms a heterodimer that binds core DNA sequence 5'-TACGTG-3' within the hypoxia response element (HRE) of target gene promoters. Interacts with COPS5; the interaction increases the transcriptional activity of HIF1A through increased stability. Interacts with EP300 (via TAZ-type 1 domains); the interaction is stimulated in response to hypoxia and inhibited by CITED2. Interacts with CREBBP (via TAZ-type 1 domains). Interacts with NCOA1, NCOA2, APEX1 and HSP90. Interacts (hydroxylated within the ODD domain) with VHLL (via beta domain); the interaction, leads to polyubiquitination and subsequent HIF1A proteasomal degradation. During hypoxia, sumoylated HIF1A also binds VHL; the interaction promotes the ubiquitination of HIF1A. Interacts with SENP1; the interaction desumoylates HIF1A resulting in stabilization and activation of transcription. Interacts (via the ODD domain) with NAA10; the interaction appears not to acetylate HIF1A nor have any affect on protein stability, during hypoxia. Interacts with RWDD3; the interaction enhances HIF1A sumoylation. Interacts with TSGA10. Interacts with HIF3A. Interacts with RORA (via the DNA binding domain); the interaction enhances HIF1A transcription under hypoxia through increasing protein stability. Interaction with PSMA7 inhibits the transactivation activity of HIF1A under both normoxic and hypoxia-mimicking conditions. Interacts with USP20. Interacts with RACK1; promotes HIF1A ubiquitination and proteasome-mediated degradation. Interacts (via N-terminus) with USP19. Interacts with SIRT2. Interacts (deacetylated form) with EGLN1. Interacts with CBFA2T3. Interacts with HSP90AA1 and HSP90AB1. Interacts with DCUN1D1; this interaction increases the interaction between VHL and DCUN1D1. Interacts with HIF1AN. In terms of processing, S-nitrosylation of Cys-799 may be responsible for increased recruitment of p300 coactivator necessary for transcriptional activity of HIF-1 complex. Acetylation of Lys-531 by ARD1 increases interaction with VHL and stimulates subsequent proteasomal degradation. Deacetylated by SIRT2 increases its interaction with and hydroxylation by EGLN1 thereby inactivating HIF1A activity by inducing its proteasomal degradation. Post-translationally, ubiquitinated; in normoxia, following hydroxylation and interaction with VHL. Lys-531 appears to be the principal site of ubiquitination. Clioquinol, the Cu/Zn-chelator, inhibits ubiquitination through preventing hydroxylation at Asn-802. Ubiquitinated by E3 ligase VHL. Deubiquitinated by UCHL1. In terms of processing, requires phosphorylation for DNA-binding. Phosphorylation at Ser-247 by CSNK1D/CK1 represses kinase activity and impairs ARNT binding. Phosphorylation by GSK3-beta and PLK3 promote degradation by the proteasome. The iron and 2-oxoglutarate dependent 3-hydroxylation of asparagine is (S) stereospecific within HIF CTAD domains. Post-translationally, sumoylated; with SUMO1 under hypoxia. Sumoylation is enhanced through interaction with RWDD3. Both sumoylation and desumoylation seem to be involved in the regulation of its stability during hypoxia. Sumoylation can promote either its stabilization or its VHL-dependent degradation by promoting hydroxyproline-independent HIF1A-VHL complex binding, thus leading to HIF1A ubiquitination and proteasomal degradation. Desumoylation by SENP1 increases its stability amd transcriptional activity. There is a disaccord between various publications on the effect of sumoylation and desumoylation on its stability and transcriptional activity. In terms of processing, in normoxia, is hydroxylated on Pro-402 and Pro-563 in the oxygen-dependent degradation domain (ODD) by EGLN1/PHD2 and EGLN2/PHD1. EGLN3/PHD3 has also been shown to hydroxylate Pro-563. The hydroxylated prolines promote interaction with VHL, initiating rapid ubiquitination and subsequent proteasomal degradation. Deubiquitinated by USP20. Under hypoxia, proline hydroxylation is impaired and ubiquitination is attenuated, resulting in stabilization. In normoxia, is hydroxylated on Asn-802 by HIF1AN, thus abrogating interaction with CREBBP and EP300 and preventing transcriptional activation. Repressed by iron ion, via Fe(2+) prolyl hydroxylase (PHD) enzymes-mediated hydroxylation and subsequent proteasomal degradation. In terms of tissue distribution, expressed in the kidney, higher expression is seen in the renal medulla than in the cortex. Expressed also in the perivenous zone of the liver.

The protein resides in the cytoplasm. The protein localises to the nucleus. Its subcellular location is the nucleus speckle. Induced by reactive oxygen species (ROS). Its function is as follows. Functions as a master transcriptional regulator of the adaptive response to hypoxia. Under hypoxic conditions, activates the transcription of over 40 genes, including erythropoietin, glucose transporters, glycolytic enzymes, vascular endothelial growth factor, HILPDA, and other genes whose protein products increase oxygen delivery or facilitate metabolic adaptation to hypoxia. Plays an essential role in embryonic vascularization, tumor angiogenesis and pathophysiology of ischemic disease. Heterodimerizes with ARNT; heterodimer binds to core DNA sequence 5'-TACGTG-3' within the hypoxia response element (HRE) of target gene promoters. Activation requires recruitment of transcriptional coactivators such as CREBBP and EP300. Activity is enhanced by interaction with NCOA1 and/or NCOA2. Interaction with redox regulatory protein APEX1 seems to activate CTAD and potentiates activation by NCOA1 and CREBBP. Involved in the axonal distribution and transport of mitochondria in neurons during hypoxia. The sequence is that of Hypoxia-inducible factor 1-alpha (Hif1a) from Rattus norvegicus (Rat).